A 327-amino-acid polypeptide reads, in one-letter code: Methionyl-tRNA formyltransferase (327 aa).

Position 118–121 (118–121) interacts with (6S)-5,6,7,8-tetrahydrofolate; the sequence is SLLP.

It belongs to the Fmt family.

It catalyses the reaction L-methionyl-tRNA(fMet) + (6R)-10-formyltetrahydrofolate = N-formyl-L-methionyl-tRNA(fMet) + (6S)-5,6,7,8-tetrahydrofolate + H(+). Its function is as follows. Attaches a formyl group to the free amino group of methionyl-tRNA(fMet). The formyl group appears to play a dual role in the initiator identity of N-formylmethionyl-tRNA by promoting its recognition by IF2 and preventing the misappropriation of this tRNA by the elongation apparatus. This chain is Methionyl-tRNA formyltransferase, found in Corynebacterium jeikeium (strain K411).